Here is a 594-residue protein sequence, read N- to C-terminus: MENNRNYFVAIALSVLILIAWQFFYVSPKMEKDRIAAEQAQQAQQTQQQPGAQPAAPGQALPGGAIPSAGESRDQAIGKSARVAIDTPALSGSINLTGARFDDLKLKGYRETVDPKSPVITLFSPAETADGYFTEIGYIGSDATGSVPGPQTTWTLSGGDKLTPSTPVTLSYTNDKGITFARTISVDDRYMFQVVDSIKNETAAPVSLSSYGRVTRFNKPTTPSIYVLHEGFVGVAGEHGLQEVGYSKVEDDEPVEPGKSTGGWLGITDKYWAATIVPPQATPFDIRFSHFADGRPRYQSDYKSDAVTVAPGQSVELKNLVFAGAKEVPVVDNYEVAYSIPNFDKLIDWGWFYFITKPMFKMMDFFFRLFGNFGIAILITTIVVKLIFFPLANKQYASMANMKKVQPKMEELKKKFGDDRMGLQQAMMQLYKEEKINPLAGCWPILIQIPVFFALYKVIYVTIEMRHAPFFGWIQDLSAPDPTTIINLFGLLPFEGPAFLHLGIWPIIMGVTMFLQMRMNPTPPDPTQAMLFTWMPVVFTFMLASFPAGLVIYWAWNNTLSILQQGIIMKRQGVKVELFDNLKSLFSKKPKPAE.

A helical membrane pass occupies residues 7-27 (YFVAIALSVLILIAWQFFYVS). The interval 36–73 (AAEQAQQAQQTQQQPGAQPAAPGQALPGGAIPSAGESR) is disordered. Positions 37–65 (AEQAQQAQQTQQQPGAQPAAPGQALPGGA) are enriched in low complexity. 4 consecutive transmembrane segments (helical) span residues 369–389 (LFGN…LIFF), 443–463 (WPIL…YVTI), 488–508 (LFGL…WPII), and 532–552 (FTWM…GLVI).

It belongs to the OXA1/ALB3/YidC family. Type 1 subfamily. As to quaternary structure, interacts with the Sec translocase complex via SecD. Specifically interacts with transmembrane segments of nascent integral membrane proteins during membrane integration.

It is found in the cell inner membrane. In terms of biological role, required for the insertion and/or proper folding and/or complex formation of integral membrane proteins into the membrane. Involved in integration of membrane proteins that insert both dependently and independently of the Sec translocase complex, as well as at least some lipoproteins. Aids folding of multispanning membrane proteins. The protein is Membrane protein insertase YidC of Rhizobium meliloti (strain 1021) (Ensifer meliloti).